We begin with the raw amino-acid sequence, 37 residues long: Large ribosomal subunit protein bL36 (37 aa).

This sequence belongs to the bacterial ribosomal protein bL36 family.

This chain is Large ribosomal subunit protein bL36, found in Endomicrobium trichonymphae.